The following is a 239-amino-acid chain: tRNA (guanine-N(1)-)-methyltransferase (239 aa).

S-adenosyl-L-methionine is bound by residues Gly-108 and 127–132; that span reads LGDYVL.

The protein belongs to the RNA methyltransferase TrmD family. Homodimer.

The protein localises to the cytoplasm. The catalysed reaction is guanosine(37) in tRNA + S-adenosyl-L-methionine = N(1)-methylguanosine(37) in tRNA + S-adenosyl-L-homocysteine + H(+). Specifically methylates guanosine-37 in various tRNAs. The sequence is that of tRNA (guanine-N(1)-)-methyltransferase from Streptococcus pneumoniae serotype 19F (strain G54).